Reading from the N-terminus, the 349-residue chain is uncharacterized protein (349 aa).

This is an uncharacterized protein from Ostreid herpesvirus 1 (isolate France) (OsHV-1).